The following is a 158-amino-acid chain: Cyclic pyranopterin monophosphate synthase (158 aa).

Residues 74 to 76 and 112 to 113 each bind substrate; these read MCH and ME. The active site involves Asp-127.

The protein belongs to the MoaC family. As to quaternary structure, homohexamer; trimer of dimers.

It carries out the reaction (8S)-3',8-cyclo-7,8-dihydroguanosine 5'-triphosphate = cyclic pyranopterin phosphate + diphosphate. It functions in the pathway cofactor biosynthesis; molybdopterin biosynthesis. Functionally, catalyzes the conversion of (8S)-3',8-cyclo-7,8-dihydroguanosine 5'-triphosphate to cyclic pyranopterin monophosphate (cPMP). The polypeptide is Cyclic pyranopterin monophosphate synthase (Thermoanaerobacter sp. (strain X514)).